A 357-amino-acid polypeptide reads, in one-letter code: 5-hydroxytryptamine receptor 5A (357 aa).

At 1–36 the chain is on the extracellular side; that stretch reads MDLPVNLTSFSLSTPSPLETNHSLGKDDLRPSSPLL. N-linked (GlcNAc...) asparagine glycosylation is found at N6 and N21. The chain crosses the membrane as a helical span at residues 37–63; the sequence is SVFGVLILTLLGFLVAATFAWNLLVLA. Residues 64–76 lie on the Cytoplasmic side of the membrane; sequence TILRVRTFHRVPH. Residues 77-103 form a helical membrane-spanning segment; it reads NLVASMAVSDVLVAALVMPLSLVHELS. Residues 104–114 are Extracellular-facing; it reads GRRWQLGRRLC. The cysteines at positions 114 and 192 are disulfide-linked. Residues 115–137 form a helical membrane-spanning segment; sequence QLWIACDVLCCTASIWNVTAIAL. Position 121 (D121) interacts with serotonin. Topologically, residues 138-155 are cytoplasmic; it reads DRYWSITRHMEYTLRTRK. A helical membrane pass occupies residues 156 to 176; the sequence is CVSNVMIALTWALSAVISLAP. Residues 177–198 are Extracellular-facing; that stretch reads LLFGWGETYSEGSEECQVSREP. Residues 199–220 traverse the membrane as a helical segment; the sequence is SYAVFSTVGAFYLPLCVVLFVY. Over 221–287 the chain is Cytoplasmic; that stretch reads WKIYKAAKFR…QKEQRAALMV (67 aa). Residues 288–312 traverse the membrane as a helical segment; that stretch reads GILIGVFVLCWIPFFLTELISPLCS. Topologically, residues 313-314 are extracellular; sequence CD. A helical membrane pass occupies residues 315 to 339; that stretch reads IPAIWKSIFLWLGYSNSFFNPLIYT. Topologically, residues 340 to 357 are cytoplasmic; that stretch reads AFNKNYNSAFKNFFSRQH.

It belongs to the G-protein coupled receptor 1 family.

It localises to the cell membrane. Functionally, G-protein coupled receptor for 5-hydroxytryptamine (serotonin), a biogenic hormone that functions as a neurotransmitter, a hormone and a mitogen. Also functions as a receptor for ergot alkaloid derivatives and other psychoactive substances. Ligand binding causes a conformation change that triggers signaling via guanine nucleotide-binding proteins (G proteins) and modulates the activity of downstream effectors. HTR5A is coupled to G(i)/G(o) G alpha proteins and mediates inhibitory neurotransmission: signaling inhibits adenylate cyclase activity and activates a phosphatidylinositol-calcium second messenger system that regulates the release of Ca(2+) ions from intracellular stores. This Homo sapiens (Human) protein is 5-hydroxytryptamine receptor 5A.